The following is a 329-amino-acid chain: N-acetyl-gamma-glutamyl-phosphate reductase (329 aa).

The active site involves Cys155.

Belongs to the NAGSA dehydrogenase family. Type 1 subfamily.

It is found in the cytoplasm. It carries out the reaction N-acetyl-L-glutamate 5-semialdehyde + phosphate + NADP(+) = N-acetyl-L-glutamyl 5-phosphate + NADPH + H(+). The protein operates within amino-acid biosynthesis; L-arginine biosynthesis; N(2)-acetyl-L-ornithine from L-glutamate: step 3/4. Its function is as follows. Catalyzes the NADPH-dependent reduction of N-acetyl-5-glutamyl phosphate to yield N-acetyl-L-glutamate 5-semialdehyde. The chain is N-acetyl-gamma-glutamyl-phosphate reductase from Shewanella pealeana (strain ATCC 700345 / ANG-SQ1).